The sequence spans 336 residues: Nuclear envelope-associated protein 3 (336 aa).

2 coiled-coil regions span residues 14–87 (LKDL…IRAS) and 128–261 (VLSK…LKKK). Positions 240–261 (KTKELEDQVENQRRIDQELKKK) match the Bipartite nuclear localization signal motif. A helical membrane pass occupies residues 313–330 (LWDKSGFKIVVSMSMLIL).

In terms of assembly, forms homomers and heteromers with NEAP1 and NEAP2. Interacts with SUN1 and SUN2.

The protein localises to the nucleus inner membrane. It localises to the nucleus. It is found in the nucleoplasm. The polypeptide is Nuclear envelope-associated protein 3 (Arabidopsis thaliana (Mouse-ear cress)).